Reading from the N-terminus, the 182-residue chain is Ribosome-recycling factor (182 aa).

Belongs to the RRF family.

The protein resides in the cytoplasm. Responsible for the release of ribosomes from messenger RNA at the termination of protein biosynthesis. May increase the efficiency of translation by recycling ribosomes from one round of translation to another. In Prochlorococcus marinus subsp. pastoris (strain CCMP1986 / NIES-2087 / MED4), this protein is Ribosome-recycling factor.